Consider the following 733-residue polypeptide: Phosphoribosylformylglycinamidine synthase subunit PurL (733 aa).

His-32 is a catalytic residue. Tyr-35 contacts ATP. A Mg(2+)-binding site is contributed by Glu-81. Substrate-binding positions include 82–85 and Arg-104; that span reads SHNH. The active-site Proton acceptor is the His-83. Residue Asp-105 coordinates Mg(2+). Gln-230 is a binding site for substrate. Mg(2+) is bound at residue Asp-258. 301 to 303 contacts substrate; sequence ESQ. Positions 482 and 519 each coordinate ATP. Mg(2+) is bound at residue Asn-520. Substrate is bound at residue Ser-522.

The protein belongs to the FGAMS family. As to quaternary structure, monomer. Part of the FGAM synthase complex composed of 1 PurL, 1 PurQ and 2 PurS subunits.

It is found in the cytoplasm. It carries out the reaction N(2)-formyl-N(1)-(5-phospho-beta-D-ribosyl)glycinamide + L-glutamine + ATP + H2O = 2-formamido-N(1)-(5-O-phospho-beta-D-ribosyl)acetamidine + L-glutamate + ADP + phosphate + H(+). It functions in the pathway purine metabolism; IMP biosynthesis via de novo pathway; 5-amino-1-(5-phospho-D-ribosyl)imidazole from N(2)-formyl-N(1)-(5-phospho-D-ribosyl)glycinamide: step 1/2. In terms of biological role, part of the phosphoribosylformylglycinamidine synthase complex involved in the purines biosynthetic pathway. Catalyzes the ATP-dependent conversion of formylglycinamide ribonucleotide (FGAR) and glutamine to yield formylglycinamidine ribonucleotide (FGAM) and glutamate. The FGAM synthase complex is composed of three subunits. PurQ produces an ammonia molecule by converting glutamine to glutamate. PurL transfers the ammonia molecule to FGAR to form FGAM in an ATP-dependent manner. PurS interacts with PurQ and PurL and is thought to assist in the transfer of the ammonia molecule from PurQ to PurL. The polypeptide is Phosphoribosylformylglycinamidine synthase subunit PurL (Methanocaldococcus jannaschii (strain ATCC 43067 / DSM 2661 / JAL-1 / JCM 10045 / NBRC 100440) (Methanococcus jannaschii)).